A 494-amino-acid polypeptide reads, in one-letter code: MKYNDLRDFLTLLEQQGELKRITLPVDPHLEITEIADRTLRAGGPALLFENPKGYSMPVLCNLFGTPKRVAMGMGQEDVSALREVGKLLAFLKEPEPPKGFRDLFDKLPQFKQVLNMPTKRLRGAPCQQKIVSGDDVDLNRIPIMTCWPEDAAPLITWGLTVTRGPHKERQNLGIYRQQLIGKNKLIMRWLSHRGGALDYQEWCAAHPGERFPVSVALGADPATILGAVTPVPDTLSEYAFAGLLRGTKTEVVKCISNDLEVPASAEIVLEGYIDPGEMAPEGPYGDHTGYYNEVDSFPVFTVTHITQREDAIYHSTYTGRPPDEPAVLGVALNEVFVPILQKQFPEIVDFYLPPEGCSYRLAVVTIKKQYAGHAKRVMMGVWSFLRQFMYTKFVIVCDDDVNARDWNDVIWAITTRMDPARDTVLVENTPIDYLDFASPVSGLGSKMGLDATNKWPGETQREWGRPIKKDPDVVAHIDAIWDELAIFNNGKSA.

Residue Asn172 coordinates Mn(2+). Prenylated FMN is bound by residues 175–177 (IYR), 189–191 (RWL), and 194–195 (RG). Glu238 serves as a coordination point for Mn(2+). The active-site Proton donor is Asp287.

This sequence belongs to the UbiD family. As to quaternary structure, homohexamer. Prenylated FMN is required as a cofactor. Requires Mn(2+) as cofactor.

It localises to the cell membrane. It catalyses the reaction a 4-hydroxy-3-(all-trans-polyprenyl)benzoate + H(+) = a 2-(all-trans-polyprenyl)phenol + CO2. It participates in cofactor biosynthesis; ubiquinone biosynthesis. Catalyzes the decarboxylation of 3-octaprenyl-4-hydroxy benzoate to 2-octaprenylphenol, an intermediate step in ubiquinone biosynthesis. The sequence is that of 3-octaprenyl-4-hydroxybenzoate carboxy-lyase from Escherichia coli O9:H4 (strain HS).